The following is a 186-amino-acid chain: Peptide deformylase (186 aa).

Residues cysteine 113 and histidine 156 each contribute to the Fe cation site. Glutamate 157 is a catalytic residue. Histidine 160 serves as a coordination point for Fe cation.

This sequence belongs to the polypeptide deformylase family. It depends on Fe(2+) as a cofactor.

It carries out the reaction N-terminal N-formyl-L-methionyl-[peptide] + H2O = N-terminal L-methionyl-[peptide] + formate. Functionally, removes the formyl group from the N-terminal Met of newly synthesized proteins. Requires at least a dipeptide for an efficient rate of reaction. N-terminal L-methionine is a prerequisite for activity but the enzyme has broad specificity at other positions. The chain is Peptide deformylase from Levilactobacillus brevis (strain ATCC 367 / BCRC 12310 / CIP 105137 / JCM 1170 / LMG 11437 / NCIMB 947 / NCTC 947) (Lactobacillus brevis).